The primary structure comprises 282 residues: MKLFAQGTSLDLSHPHVMGILNVTPDSFSDGGTHNSLIDAVKHANLMINAGATIIDVGGESTRPGAAEVSVEEELQRVIPVVEAIAQRFEVWISVDTSKPEVIRESAKVGAHIINDIRSLSEPGALEAAAETGLPVCLMHMQGNPKTMQEAPKYDDVFAEVNRYFIEQIARCEQAGIAKEKLLLDPGFGFGKNLSHNYSLLARLAEFHHFNLPLLVGMSRKSMIGQLLNVGPSERLSGSLACAVIAAMQGAHIIRVHDVKETVEAMRVVEATLSAKENKRYE.

Positions 15–267 (PHVMGILNVT…DVKETVEAMR (253 aa)) constitute a Pterin-binding domain. Mg(2+) is bound at residue asparagine 22. (7,8-dihydropterin-6-yl)methyl diphosphate-binding positions include threonine 62, aspartate 96, asparagine 115, aspartate 185, lysine 221, and 255 to 257 (RVH).

The protein belongs to the DHPS family. As to quaternary structure, homodimer. It depends on Mg(2+) as a cofactor.

It catalyses the reaction (7,8-dihydropterin-6-yl)methyl diphosphate + 4-aminobenzoate = 7,8-dihydropteroate + diphosphate. The protein operates within cofactor biosynthesis; tetrahydrofolate biosynthesis; 7,8-dihydrofolate from 2-amino-4-hydroxy-6-hydroxymethyl-7,8-dihydropteridine diphosphate and 4-aminobenzoate: step 1/2. Its function is as follows. Catalyzes the condensation of para-aminobenzoate (pABA) with 6-hydroxymethyl-7,8-dihydropterin diphosphate (DHPt-PP) to form 7,8-dihydropteroate (H2Pte), the immediate precursor of folate derivatives. This chain is Dihydropteroate synthase (folP), found in Shigella flexneri.